Reading from the N-terminus, the 528-residue chain is NAC domain-containing protein 13 (528 aa).

The 151-residue stretch at 10 to 160 (LAPGFRFHPT…AYVLYKIYKK (151 aa)) folds into the NAC domain. The DNA-binding element occupies 107–166 (VGEKKTLVFHRGRAPNGERTNWVMHEYTLHKEELKRCGGEDVKDAYVLYKIYKKSGSGPK). The disordered stretch occupies residues 388–419 (EAPGTGDSSEFLNPVPSGISTTNEDDPSKDES). The helical transmembrane segment at 499–519 (FFCLSIIGALCALFWVIIGTM) threads the bilayer.

Interacts with RCD1. In terms of tissue distribution, expressed in roots, rosette leaves, shoot apex, stems and flowers.

The protein resides in the endoplasmic reticulum membrane. Its subcellular location is the nucleus. Its function is as follows. Transcriptional activator activated by proteolytic cleavage through regulated intramembrane proteolysis (RIP). Involved in oxidative stress tolerance by mediating regulation of mitochondrial retrograde signaling during mitochondrial dysfunction. Interacts directly with the mitochondrial dysfunction DNA consensus motif 5'-CTTGNNNNNCA[AC]G-3', a cis-regulatory elements of several mitochondrial retrograde regulation-induced genes, and triggers increased oxidative stress tolerance. The polypeptide is NAC domain-containing protein 13 (Arabidopsis thaliana (Mouse-ear cress)).